The following is a 391-amino-acid chain: Histamine H4 receptor (391 aa).

Residues 1-19 (MSESNSTGILPPAAQVPLA) are Extracellular-facing. The N-linked (GlcNAc...) asparagine glycan is linked to asparagine 5. The chain crosses the membrane as a helical span at residues 20–40 (FLMSSFAFAIMVGNAVVILAF). Residues 41–52 (VVDRNLRHRSNY) are Cytoplasmic-facing. A helical membrane pass occupies residues 53-73 (FFLNLAISDFLVGLISIPLYI). Over 74-87 (PHVLFNWNFGSGIC) the chain is Extracellular. Cysteine 87 and cysteine 166 are joined by a disulfide. A helical transmembrane segment spans residues 88–108 (MFWLITDYLLCTASVYNIVLI). Over 109–131 (SYDRYQSVSNAVSYRAQHTGIMK) the chain is Cytoplasmic. The chain crosses the membrane as a helical span at residues 132–152 (IVAQMVAVWILAFLVNGPMIL). At 153-174 (ASDSWKNSTNTKDCEPGFVTEW) the chain is on the extracellular side. Asparagine 159 is a glycosylation site (N-linked (GlcNAc...) asparagine). The chain crosses the membrane as a helical span at residues 175-195 (YILTITMLLEFLLPVISVAYF). Over 196–306 (NVQIYWSLWK…LLRGRKLARS (111 aa)) the chain is Cytoplasmic. Residues 238-258 (TSNPGLKESAASRHSESPRRK) form a disordered region. The span at 247-256 (AASRHSESPR) shows a compositional bias: basic and acidic residues. Residues 307-327 (LAILLSAFAICWAPYCLFTIV) traverse the membrane as a helical segment. The Extracellular portion of the chain corresponds to 328–343 (LSTYPRTERPKSVWYS). The helical transmembrane segment at 344–364 (IAFWLQWFNSFVNPFLYPLCH) threads the bilayer. The Cytoplasmic segment spans residues 365 to 391 (RRFQKAFWKILCVTKQPALSQNQSVSS).

It belongs to the G-protein coupled receptor 1 family. Interacts with TSPAN4.

The protein resides in the cell membrane. Functionally, the H4 subclass of histamine receptors could mediate the histamine signals in peripheral tissues. Displays a significant level of constitutive activity (spontaneous activity in the absence of agonist). This chain is Histamine H4 receptor (Hrh4), found in Mus musculus (Mouse).